Reading from the N-terminus, the 130-residue chain is uncharacterized protein (130 aa).

2 stretches are compositionally biased toward polar residues: residues 1–27 (MEILNQFSQFSPNMEAQGASSIPQPSQ) and 36–46 (QAENQETAKNG). Disordered stretches follow at residues 1-46 (MEIL…AKNG) and 103-130 (VSAQTQKATSVKFDRRRNELDSDEELDL). A coiled-coil region spans residues 27–51 (QDAHEKARQQAENQETAKNGMISQI).

It belongs to the PDCD5 family.

This is an uncharacterized protein from Caenorhabditis elegans.